Here is a 396-residue protein sequence, read N- to C-terminus: MASSAQDGNNPLFSPYKMGKFNLSHRVVLAPMTRCRALNNIPQAALGEYYEQRATAGGFLITEGTMISPTSAGFPHVPGIFTKEQVREWKKIVDVVHAKGAVIFCQLWHVGRASHEVYQPAGAAPISSTEKPISNRWRILMPDGTHGIYPKPRAIGTYEISQVVEDYRRSALNAIEAGFDGIEIHGAHGYLIDQFLKDGINDRTDEYGGSLANRCKFITQVVQAVVSAIGADRVGVRVSPAIDHLDAMDSNPLSLGLAVVERLNKIQLHSGSKLAYLHVTQPRYVAYGQTEAGRLGSEEEEARLMRTLRNAYQGTFICSGGYTRELGIEAVAQGDADLVSYGRLFISNPDLVMRIKLNAPLNKYNRKTFYTQDPVVGYTDYPFLQGNGSNGPLSRL.

FMN-binding positions include 31-33 (PMT), glycine 64, and glutamine 106. A substrate-binding site is contributed by 185–188 (HGAH). Catalysis depends on tyrosine 190, which acts as the Proton donor. An FMN-binding site is contributed by arginine 237. Substrate is bound at residue arginine 283. FMN-binding positions include glycine 321 and 342 to 343 (GR). The segment at 342–343 (GR) is FMN. Residues 394–396 (SRL) carry the Microbody targeting signal motif.

The protein belongs to the NADH:flavin oxidoreductase/NADH oxidase family. It depends on FMN as a cofactor. Expressed in roots and to a lower extent in leaves and flowers.

It localises to the peroxisome. It catalyses the reaction (1S,2S)-OPC-8 + NADP(+) = (9S,13S,15Z)-12-oxophyto-10,15-dienoate + NADPH + H(+). It participates in lipid metabolism; oxylipin biosynthesis. Its function is as follows. Specifically cleaves olefinic bonds in cyclic enones. Involved in the biosynthesis of jasmonic acid (JA) and perhaps in biosynthesis or metabolism of other oxylipin signaling moleclules. It is required for the spatial and temporal regulation of JA levels during dehiscence of anthers, promoting the stomium degeneration program. In vitro, reduces 9S,13S-12-oxophytodienoic acid (9S,13S-OPDA) and 9R,13R-OPDA to 9S,13S-OPC-8:0 and 9R,13R-OPC-8:0, respectively. The chain is 12-oxophytodienoate reductase 3 (OPR3) from Solanum lycopersicum (Tomato).